We begin with the raw amino-acid sequence, 1336 residues long: Aldehyde oxidase 4 (1336 aa).

In terms of domain architecture, 2Fe-2S ferredoxin-type spans 8–95 (DELIFFVNGK…GAAITTVEGV (88 aa)). Cysteine 47, cysteine 52, cysteine 55, and cysteine 77 together coordinate [2Fe-2S] cluster. Glutamine 116 provides a ligand contact to Mo-molybdopterin. Cysteine 117, cysteine 120, cysteine 152, and cysteine 154 together coordinate [2Fe-2S] cluster. Cysteine 154 serves as a coordination point for Mo-molybdopterin. The 187-residue stretch at 237–423 (FQGKRTTWII…LSIFIPYTAQ (187 aa)) folds into the FAD-binding PCMH-type domain. FAD is bound by residues 265–272 (LVMGNTTV), alanine 346, threonine 355, histidine 359, aspartate 368, and isoleucine 413. Mo-molybdopterin contacts are provided by residues 804 to 805 (AF), leucine 1045, 1086 to 1089 (GSMG), glutamine 1201, and leucine 1265. The active-site Proton acceptor; for azaheterocycle hydroxylase activity is glutamate 1267.

Belongs to the xanthine dehydrogenase family. Homodimer. The cofactor is [2Fe-2S] cluster. FAD serves as cofactor. Requires Mo-molybdopterin as cofactor. In terms of tissue distribution, highly expressed in Harderian glands and sebaceous glands with detectable levels in the epidermis and other keratinized epithelia (at protein level). Detected in testis. The expression is 3 times greater in females than in males.

The protein localises to the cytoplasm. The catalysed reaction is an aldehyde + O2 + H2O = a carboxylate + H2O2 + H(+). The enzyme catalyses retinal + O2 + H2O = retinoate + H2O2 + H(+). It carries out the reaction all-trans-retinal + O2 + H2O = all-trans-retinoate + H2O2 + H(+). Aldehyde oxidase able to catalyze the oxidation of retinaldehyde into retinoate. Is responsible for the major all-trans-retinaldehyde-metabolizing activity in the Harderian gland, and contributes a significant amount of the same activity in the skin. Is devoid of pyridoxal-oxidizing activity, in contrast to the other aldehyde oxidases. Acts as a negative modulator of the epidermal trophism. May be able to oxidize a wide variety of aldehydes into their corresponding carboxylates and to hydroxylate azaheterocycles. The sequence is that of Aldehyde oxidase 4 (Aox4) from Mus musculus (Mouse).